The following is a 93-amino-acid chain: Alpha-defensin 3 (93 aa).

A signal peptide spans 1 to 16 (MKTLVLLSALVLLAFQ). The propeptide occupies 17–58 (VQADPIQNTDEETKTEEQPGEDDQAVSVSFGDPEGSSLQEES). The disordered stretch occupies residues 22–56 (IQNTDEETKTEEQPGEDDQAVSVSFGDPEGSSLQE). 3 cysteine pairs are disulfide-bonded: Cys-64-Cys-92, Cys-66-Cys-81, and Cys-71-Cys-91.

The protein belongs to the alpha-defensin family. In terms of tissue distribution, paneth cells of the small bowel.

It localises to the secreted. Functionally, probably contributes to the antimicrobial barrier function of the small bowel mucosa. This Mus musculus (Mouse) protein is Alpha-defensin 3 (Defa3).